Here is a 201-residue protein sequence, read N- to C-terminus: MIVQIGRREEFDKKLLGEMHKLRAQVFKERKGWDVSVIDEMEIDGYDALSPYYMLIQEDTPEAQVFGCWRILDTTGPYMLKNTFPELLHGKEAPCSPHIWELSRFAINSGQKGSLGFSDCTLEAMRALARYSLQNDIQTLVTVTTVGVEKMMIRAGLDVSRFGPHLKIGIERAVALRIELNAKTQIALYGGVLVEQRLAVS.

Belongs to the autoinducer synthase family.

The catalysed reaction is a fatty acyl-[ACP] + S-adenosyl-L-methionine = an N-acyl-L-homoserine lactone + S-methyl-5'-thioadenosine + holo-[ACP] + H(+). Functionally, required for the synthesis of PAI consisting of 3-oxo-N-(tetrahydro-2-oxo-3-furanyl)-dodecanamide also known as N-(3-oxododecanoyl)homoserine lactone, an autoinducer molecule which binds to LasR and thus acts in elastase biosynthesis regulation. This is Acyl-homoserine-lactone synthase (lasI) from Pseudomonas aeruginosa (strain ATCC 15692 / DSM 22644 / CIP 104116 / JCM 14847 / LMG 12228 / 1C / PRS 101 / PAO1).